The following is a 129-amino-acid chain: Small ribosomal subunit protein uS11 (129 aa).

It belongs to the universal ribosomal protein uS11 family. In terms of assembly, part of the 30S ribosomal subunit. Interacts with proteins S7 and S18. Binds to IF-3.

Functionally, located on the platform of the 30S subunit, it bridges several disparate RNA helices of the 16S rRNA. Forms part of the Shine-Dalgarno cleft in the 70S ribosome. This Beijerinckia indica subsp. indica (strain ATCC 9039 / DSM 1715 / NCIMB 8712) protein is Small ribosomal subunit protein uS11.